The primary structure comprises 640 residues: F-box protein MET30 (640 aa).

Basic and acidic residues predominate over residues 1–19 (MRRERQRMMSFEDKDKDDL). The segment at 1–84 (MRRERQRMMS…ATNDSGTRVQ (84 aa)) is disordered. The tract at residues 1 to 299 (MRRERQRMMS…KGHCRIQEFK (299 aa)) is necessary to mediate nuclear localization. 2 stretches are compositionally biased toward polar residues: residues 45-56 (TGSSDDLAQGSS) and 64-82 (ATRSPSSSPDLATNDSGTR). The residue at position 67 (serine 67) is a Phosphoserine. The segment at 180–225 (KIDFISILPQELSLKILSYLDCQSLCNATRVCRKWQKLADDDRVWY) is interaction with SKP1/CBF3D. Residues 180–277 (KIDFISILPQ…TQTTRPWKVI (98 aa)) form an important for mediating homomultimerization region. The 47-residue stretch at 181-227 (IDFISILPQELSLKILSYLDCQSLCNATRVCRKWQKLADDDRVWYHM) folds into the F-box domain. The segment at 277–640 (IYRERFKVES…VKMYKFDLND (364 aa)) is interaction with MET4. 8 WD repeats span residues 300–328 (GHMDGVLTLQFNYRLLFTGSYDSTIGIWD), 340–368 (GHSDGVKTLYFDDRKLITGSLDKTIRVWN), 380–408 (GHSDSVLSVDSYQKVIVSGSADKTVKVWH), 419–449 (GHTEWVNCVKLHPKSFSCFSCSDDTTIRMWD), 461–499 (GHVGQVQKIIPLTIKDVENLATDNTSDGSSPQDDPTMTD), 509–538 (NEQETVLDENIPYPTHLLSCGLDNTIKLWD), 550–578 (GHVEGVWDIAADNFRIISGSHDGSIKVWD), and 607–635 (DKVAPIACVCIGDSECFSGDEFGCVKMYK). Residues 481–495 (ATDNTSDGSSPQDDP) show a composition bias toward polar residues. Residues 481–516 (ATDNTSDGSSPQDDPTMTDGADESDTPSNEQETVLD) are disordered.

It belongs to the WD repeat MET30/SCONB/SCON-2 family. As to quaternary structure, homomultimer. Interacts with CDC53 and SKP1/CBF3D to form the E3 ubiquitin ligase complex SCF(Met30). Interacts with MET4.

Its subcellular location is the cytoplasm. It localises to the nucleus. It participates in protein modification; protein ubiquitination. Functionally, substrate-recognition component of the SCF(Met30) complex, an E3 ubiquitin ligase complex that mediates the ubiquitination and subsequent proteasomal degradation of target proteins. Negatively regulates sulfur amino acids biosynthesis genes expression. Controls cell cycle function (being required for the G1/S transition and M-phase but not the S-phase), sulfur metabolism, and methionine biosynthesis as part of the SCF(Met30) complex. Required for the efficient binding of CDC45 and MCM proteins to origins of replication. Required for efficient expression of G1 cyclins. The SCF(Met30) complex catalyzes ubiquitination and degradation of the Cdk-inhibitory kinase SWE1. Involved in the S-adenosylmethionine (AdoMet)-mediated inhibition of the transcription function of MET4. The SCF(Met30) complex mediates ubiquitination and subsequent degradation of MET4 and the cellular response to cadmium. The SCF(Met30) complex acts as an inhibitor of autophagy by promoting ubiquitination and degradation of ATG9 in normal conditions. The sequence is that of F-box protein MET30 from Saccharomyces cerevisiae (strain ATCC 204508 / S288c) (Baker's yeast).